Consider the following 173-residue polypeptide: Small ribosomal subunit protein uS5 (173 aa).

One can recognise an S5 DRBM domain in the interval 17–80 (LREKMIAVNR…EESRRNMIKV (64 aa)).

Belongs to the universal ribosomal protein uS5 family. As to quaternary structure, part of the 30S ribosomal subunit. Contacts proteins S4 and S8.

With S4 and S12 plays an important role in translational accuracy. In terms of biological role, located at the back of the 30S subunit body where it stabilizes the conformation of the head with respect to the body. This Delftia acidovorans (strain DSM 14801 / SPH-1) protein is Small ribosomal subunit protein uS5.